The chain runs to 232 residues: Replicative helicase loading/DNA remodeling protein DnaD (232 aa).

The interval 1–98 (MKKQQFIDMQ…QNGIKFEKYS (98 aa)) is N-terminal domain. The segment at 1–116 (MKKQQFIDMQ…YEYIQLAQNQ (116 aa)) is DDBH1. The segment at 99-205 (LQPLWGKLYE…VEQAKIHSQK (107 aa)) is C-terminal domain. The DDBH2 stretch occupies residues 131–200 (TIFEEEFARP…NGLKTVEQAK (70 aa)). Residues 206 to 232 (FRRVQAKQNEPQKEYKRQVPFYNWLEQ) form a C-terminal tail region.

The protein belongs to the DnaB/DnaD family. In terms of assembly, the DNA replisome assembles sequentially on oriC in this order; DnaA, DnaD, DnaB, DnaI-DnaC helicase. Homodimer. Homotetramer. Oligomerization in vitro is concentration dependent. Part of the replication restart primosome which assembles in this order; PriA, DnaD then DnaB. The preferred DNA substrate mimics an arrested DNA replication fork with unreplicated lagging strand. Interacts with DnaA, DnaB and PriA. Interaction with DnaB requires DnaD to dimerize.

Its subcellular location is the cytoplasm. With respect to regulation, recruitment to oriC requires DnaA but not DnaB, DnaC or DnaI and is blocked by SirA. Functionally, required to load replicative helicase DnaC onto replication forks. Binds to a DnaD recognition element (DRE) which has pairs of 5'-TnnT-3' motifs; there is a strong DRE at oriC opposite the DnaA-trios recognized by DnaA. During DNA replication from the origin of replication (oriC) in the DNA replisome, DnaD is required after DnaA, before DnaB and subsequent helicase DnaC loading. A component of the replication restart primosome, which reloads the replicative helicase on sites other than oriC. DnaB, DnaD and DnaI may also be required for a PriA-independent pathway of replication fork restart. DnaB and DnaD work together to allow DnaB access to single-stranded (ss)DNA. Has DNA remodeling activity that converts supercoiled plasmid into an open circular form; DnaD forms scaffolds inside the plasmid DNA. Plasmid relaxation incorporates both wrapping around the DnaD protein scaffold and simultaneous untwisting, no nicking of the DNA is seen. Also converts linear DNA into an open circular form. Disrupts a replicative helicase-DnaI complex. Inhibits the ability of DnaA-ATP to form a helix on DNA; does not disassemble preformed helices in vitro. Binds ssDNA, and replication fork-like substrates, supercoiled plasmid, but not stably to short double-stranded (ds)DNA. DnaD stimulates DnaB DNA-binding activities. DnaB and DnaD are required to load helicase on the repN plasmid origin of replication (oriN). Causes a severe growth defect upon overexpression even in an oriC-independent strain. This Bacillus subtilis (strain 168) protein is Replicative helicase loading/DNA remodeling protein DnaD.